Consider the following 477-residue polypeptide: MKLWILGLGEFFQRYRNIWREIWKIRKQLDTPARQKDENEFLPRHLELIETPISKKPRLIAYLIMLFLFLAIVISIISKVEIVASATGKLVFSGHSKEIKPIENALVKDIFVKDGQFVEKGQLLLNLTALGCDADKQKTKVSLGLERLDGYRYKSLLYSIEHNRLPLLDFNQADFDSVQEEDKTGARHLITEQFETWQKQKYQKELAYQRKQAEKQTVLANIRKYESASRIEKEKLSDLKKLYDVKSISKHELLAQENRYVEASNELSVYQSHLKEVESDLLKAQEDLKLVTQLFKSDILEKLQQNIQREKQLTLELEKNEQRQLASIIRAPVSGTVQQLKTHTKGGVVTTAETLMVIAPEDDVLEVSALIQNKDVGFVEIGQEAVIKVETFPYTRYGYLYGKVKTITLDAIEHPQLGLVFNSIIEINKKTLTDGDKEIQLGSGMSVIAEIKTGERSVISFLLSPLEESITESLRER.

Over 1–59 (MKLWILGLGEFFQRYRNIWREIWKIRKQLDTPARQKDENEFLPRHLELIETPISKKPRL) the chain is Cytoplasmic. Residues 60–77 (IAYLIMLFLFLAIVISII) traverse the membrane as a helical segment. Topologically, residues 78-477 (SKVEIVASAT…ESITESLRER (400 aa)) are periplasmic.

The protein belongs to the membrane fusion protein (MFP) (TC 8.A.1) family.

The protein localises to the cell inner membrane. In terms of biological role, involved in the transport of the toxin RTX-III. The polypeptide is RTX-III toxin determinant D (apxIIID) (Actinobacillus pleuropneumoniae (Haemophilus pleuropneumoniae)).